Here is a 486-residue protein sequence, read N- to C-terminus: Glutamate--tRNA ligase (486 aa).

The 'HIGH' region motif lies at 11-21 (PSPTGFLHIGG). 4 residues coordinate Zn(2+): C108, C110, C136, and H138. The 'KMSKS' region motif lies at 253-257 (KLSKR). Residue K256 coordinates ATP.

The protein belongs to the class-I aminoacyl-tRNA synthetase family. Glutamate--tRNA ligase type 1 subfamily. Monomer. The cofactor is Zn(2+).

Its subcellular location is the cytoplasm. The enzyme catalyses tRNA(Glu) + L-glutamate + ATP = L-glutamyl-tRNA(Glu) + AMP + diphosphate. Its function is as follows. Catalyzes the attachment of glutamate to tRNA(Glu) in a two-step reaction: glutamate is first activated by ATP to form Glu-AMP and then transferred to the acceptor end of tRNA(Glu). This is Glutamate--tRNA ligase from Lysinibacillus sphaericus (strain C3-41).